The chain runs to 229 residues: Small ribosomal subunit protein uS5 (229 aa).

Residues 61 to 124 (LEEQVLDVKL…AHAKLSLIKV (64 aa)) enclose the S5 DRBM domain.

It belongs to the universal ribosomal protein uS5 family. In terms of assembly, part of the 30S ribosomal subunit. Contacts protein S4.

In terms of biological role, with S4 and S12 plays an important role in translational accuracy. This is Small ribosomal subunit protein uS5 from Methanococcus maripaludis (strain C6 / ATCC BAA-1332).